Consider the following 55-residue polypeptide: Ferredoxin (55 aa).

2 consecutive 4Fe-4S ferredoxin-type domains span residues 2–27 (YFITDACISCGACESECPVSPISPGD) and 28–55 (SVYVIDADACIECGACANVCPVDAPQQK). [4Fe-4S] cluster-binding residues include Cys8, Cys11, Cys14, Cys18, Cys37, Cys40, Cys43, and Cys47.

It depends on [4Fe-4S] cluster as a cofactor.

Functionally, ferredoxins are iron-sulfur proteins that transfer electrons in a wide variety of metabolic reactions. The sequence is that of Ferredoxin from Acetivibrio thermocellus (Hungateiclostridium thermocellum).